Reading from the N-terminus, the 641-residue chain is Serine/threonine-protein kinase pink-1, mitochondrial (641 aa).

Residues 1-74 constitute a mitochondrion transit peptide; that stretch reads MSMKRFGKAA…TRHGRVFRPF (74 aa). Positions 137–483 constitute a Protein kinase domain; the sequence is YEFGEFLGQG…AANALNLSLF (347 aa). Residues 143-151 and lysine 199 each bind ATP; that span reads LGQGCNAAV. The Proton acceptor role is filled by aspartate 338.

The protein belongs to the protein kinase superfamily. Ser/Thr protein kinase family. Mg(2+) is required as a cofactor. In terms of processing, autophosphorylated.

The protein localises to the mitochondrion. It carries out the reaction L-seryl-[protein] + ATP = O-phospho-L-seryl-[protein] + ADP + H(+). The enzyme catalyses L-threonyl-[protein] + ATP = O-phospho-L-threonyl-[protein] + ADP + H(+). In terms of biological role, protects against mitochondrial dysfunction during cellular stress, potentially by phosphorylating mitochondrial proteins. Plays a role in mitophagy. The sequence is that of Serine/threonine-protein kinase pink-1, mitochondrial (pink-1) from Caenorhabditis elegans.